The sequence spans 196 residues: Putative NADH dehydrogenase/NAD(P)H nitroreductase XCV0587 (196 aa).

It belongs to the nitroreductase family. HadB/RutE subfamily. The cofactor is FMN.

The sequence is that of Putative NADH dehydrogenase/NAD(P)H nitroreductase XCV0587 from Xanthomonas euvesicatoria pv. vesicatoria (strain 85-10) (Xanthomonas campestris pv. vesicatoria).